A 402-amino-acid chain; its full sequence is Multidrug resistance protein MdtH (402 aa).

Residues 1–12 (MSRVSQARNLGK) are Cytoplasmic-facing. A helical transmembrane segment spans residues 13–33 (YFLLIDNMLVVLGFFVVFPLI). Residues 34–98 (SIRFVDQMGW…GFATMGIAHE (65 aa)) lie on the Periplasmic side of the membrane. A helical transmembrane segment spans residues 99–116 (PWLLWFSCFLSGLGGTLF). Residues 117–138 (DPPRSALVVKLIRPEQRGRFFS) are Cytoplasmic-facing. A helical membrane pass occupies residues 139 to 159 (LLMMQDSAGAVIGALLGSWLL). Residues 160 to 164 (QYDFR) lie on the Periplasmic side of the membrane. Residues 165-185 (LVCATGAILFILCALFNAWLL) form a helical membrane-spanning segment. Residues 186–213 (PAWKLSTVRTPVREGMRRVMSDKRFVTY) lie on the Cytoplasmic side of the membrane. A helical transmembrane segment spans residues 214 to 234 (VLTLAGYYMLAVQVMLMLPIM). Residues 235 to 243 (VNDIAGSPA) lie on the Periplasmic side of the membrane. The chain crosses the membrane as a helical span at residues 244–264 (AVKWMYAIEACLSLTLLYPIA). Over 265 to 276 (RWSEKRFRLEHR) the chain is Cytoplasmic. The helical transmembrane segment at 277–297 (LMAGLLVMSLSMLPIGMVGNL) threads the bilayer. Residues 298–299 (QQ) are Periplasmic-facing. The helical transmembrane segment at 300–320 (LFTLICAFYIGSVIAEPARET) threads the bilayer. Over 321–339 (LSASLADARARGSYMGFSR) the chain is Cytoplasmic. A helical membrane pass occupies residues 340 to 360 (LGLAIGGAIGYIGGGWLFDMG). Residues 361–367 (KALAQPE) are Periplasmic-facing. Residues 368–388 (LPWMMLGIIGFITFLALGWQF) form a helical membrane-spanning segment. Over 389 to 402 (SHKRTPRRMLEPGA) the chain is Cytoplasmic.

The protein belongs to the major facilitator superfamily. DHA1 family. MdtH (TC 2.A.1.2.21) subfamily.

It is found in the cell inner membrane. The protein is Multidrug resistance protein MdtH of Salmonella agona (strain SL483).